The sequence spans 564 residues: Phenylalanine--tRNA ligase beta subunit (564 aa).

Residues 286-362 (YFQNMLEVNV…IGMGLDSFKP (77 aa)) form the B5 domain. Residues aspartate 340, aspartate 346, glutamate 349, and glutamate 350 each coordinate Mg(2+).

Belongs to the phenylalanyl-tRNA synthetase beta subunit family. Type 2 subfamily. Tetramer of two alpha and two beta subunits. Mg(2+) serves as cofactor.

Its subcellular location is the cytoplasm. The enzyme catalyses tRNA(Phe) + L-phenylalanine + ATP = L-phenylalanyl-tRNA(Phe) + AMP + diphosphate + H(+). This Borrelia turicatae (strain 91E135) protein is Phenylalanine--tRNA ligase beta subunit.